Here is a 309-residue protein sequence, read N- to C-terminus: Cytochrome c biogenesis protein CcsA (309 aa).

A run of 8 helical transmembrane segments spans residues 18 to 38 (LGLL…GAFF), 43 to 63 (FFIV…QLLF), 67 to 87 (ISGH…TWGI), 102 to 122 (IIPS…CFVL), 148 to 168 (VMLS…VLFI), 216 to 236 (SILI…VWAN), 250 to 267 (TWAF…HMRI), and 279 to 299 (LATT…FLGI).

Belongs to the CcmF/CycK/Ccl1/NrfE/CcsA family. May interact with ccs1.

It localises to the cellular thylakoid membrane. Its function is as follows. Required during biogenesis of c-type cytochromes (cytochrome c6 and cytochrome f) at the step of heme attachment. The chain is Cytochrome c biogenesis protein CcsA from Prochlorococcus marinus (strain MIT 9215).